A 428-amino-acid chain; its full sequence is MSKSLNLEPIGKINGTVYLPGSKSISNRVLLLSALAAGKTRLTNFLDSDDTRYMLEALKALGVRYTVSKNGTCCEVEGVNGPLNTPHPIELMTGNAGTVMRFLTAVLSLGQSDVVLTGGARMKERPMDPLVDALRQGNAQITYLEKKNSPPLRLRGGFRGGNLTLRGNISSQFLTALLIMAPLAEQDTAIEVQGFLVSKPYVEMTLHLMRVFGISVTHKHYRTFNIKAHQKFKSPGHYRIEGDATAASYFLAAAAIKGGCVRVIGVGQKSIQGDVQFADVLQKMGAFIHWGEDYIECRPGRLKGIDMDMNSMPDAAMTLATTALFSEGPTRIQNIYNWRLKETDRLSAMSAELRKLGAQIKEGQDYIEIISPKNLKAAEIQTYNDHRIAMSFSLMALSDMPIRILNPRCTSKTFPDFFQKLAYLSGTV.

3-phosphoshikimate-binding residues include Lys23, Ser24, and Arg28. Lys23 provides a ligand contact to phosphoenolpyruvate. Residues Gly97 and Arg125 each coordinate phosphoenolpyruvate. The 3-phosphoshikimate site is built by Ser170, Ser171, Gln172, Ser198, Asp314, Asn337, and Lys341. Residue Gln172 participates in phosphoenolpyruvate binding. The active-site Proton acceptor is Asp314. Residues Arg345, Arg387, and Lys412 each coordinate phosphoenolpyruvate.

It belongs to the EPSP synthase family. In terms of assembly, monomer.

The protein localises to the cytoplasm. It carries out the reaction 3-phosphoshikimate + phosphoenolpyruvate = 5-O-(1-carboxyvinyl)-3-phosphoshikimate + phosphate. It participates in metabolic intermediate biosynthesis; chorismate biosynthesis; chorismate from D-erythrose 4-phosphate and phosphoenolpyruvate: step 6/7. Functionally, catalyzes the transfer of the enolpyruvyl moiety of phosphoenolpyruvate (PEP) to the 5-hydroxyl of shikimate-3-phosphate (S3P) to produce enolpyruvyl shikimate-3-phosphate and inorganic phosphate. This chain is 3-phosphoshikimate 1-carboxyvinyltransferase, found in Hamiltonella defensa subsp. Acyrthosiphon pisum (strain 5AT).